Reading from the N-terminus, the 832-residue chain is Elongation factor 2 (832 aa).

Residues 17–336 enclose the tr-type G domain; sequence HNIRNMSVIA…MIVTHLPSPA (320 aa). 26-33 contacts GTP; it reads AHVDHGKS. Residues T57 and T59 each carry the phosphothreonine modification. GTP is bound by residues 152-155 and 207-209; these read NKVD and SGL. The segment at 580 to 608 is disordered; the sequence is AEPLPDGLTDDIEEGKVSPRDDPKERSNL. Residues 593–608 show a composition bias toward basic and acidic residues; sequence EGKVSPRDDPKERSNL. H689 bears the Diphthamide mark.

The protein belongs to the TRAFAC class translation factor GTPase superfamily. Classic translation factor GTPase family. EF-G/EF-2 subfamily.

The protein resides in the cytoplasm. It catalyses the reaction GTP + H2O = GDP + phosphate + H(+). Catalyzes the GTP-dependent ribosomal translocation step during translation elongation. During this step, the ribosome changes from the pre-translocational (PRE) to the post-translocational (POST) state as the newly formed A-site-bound peptidyl-tRNA and P-site-bound deacylated tRNA move to the P and E sites, respectively. Catalyzes the coordinated movement of the two tRNA molecules, the mRNA and conformational changes in the ribosome. This chain is Elongation factor 2, found in Cryptosporidium parvum.